Here is a 474-residue protein sequence, read N- to C-terminus: Probable periplasmic serine endoprotease DegP-like (474 aa).

The N-terminal stretch at 1–26 is a signal peptide; that stretch reads MTRMTRHLALWMLLSLAILASQSAMA. Residues His-116, Asp-146, and Ser-219 each act as charge relay system in the active site. Residues 217–219 and 274–278 each bind substrate; these read GNS and LGVMI. PDZ domains are found at residues 263-354 and 360-462; these read LRND…LRNG and TVTV…YRSG.

The protein belongs to the peptidase S1C family.

The protein localises to the periplasm. The enzyme catalyses Acts on substrates that are at least partially unfolded. The cleavage site P1 residue is normally between a pair of hydrophobic residues, such as Val-|-Val.. Might be efficient in the degradation of transiently denatured and unfolded proteins which accumulate in the periplasm following stress conditions. This chain is Probable periplasmic serine endoprotease DegP-like (mucD), found in Halomonas elongata (strain ATCC 33173 / DSM 2581 / NBRC 15536 / NCIMB 2198 / 1H9).